Reading from the N-terminus, the 481-residue chain is UDP-glucose 6-dehydrogenase (481 aa).

NAD(+) is bound by residues 16–21 (GAGYVG), Asp41, Lys46, 94–98 (VNTPT), 135–136 (ST), and Glu172. Substrate-binding positions include 168–172 (EFLAE), 227–231 (KLVAN), Arg267, and 274–280 (QASVGFG). Catalysis depends on Cys283, which acts as the Nucleophile. 283–286 (CFQK) serves as a coordination point for NAD(+). Residue 345 to 346 (FK) coordinates substrate. Arg353 lines the NAD(+) pocket. Residue Arg447 coordinates substrate.

The protein belongs to the UDP-glucose/GDP-mannose dehydrogenase family. Expressed in the vulva and in oocytes.

The catalysed reaction is UDP-alpha-D-glucose + 2 NAD(+) + H2O = UDP-alpha-D-glucuronate + 2 NADH + 3 H(+). It functions in the pathway nucleotide-sugar biosynthesis; UDP-alpha-D-glucuronate biosynthesis; UDP-alpha-D-glucuronate from UDP-alpha-D-glucose: step 1/1. Functionally, involved in the biosynthesis of glycosaminoglycans; hyaluronan, chondroitin sulfate, and heparan sulfate. The polypeptide is UDP-glucose 6-dehydrogenase (sqv-4) (Caenorhabditis elegans).